Consider the following 258-residue polypeptide: Cytosolic Fe-S cluster assembly factor Nubp2 homolog (258 aa).

ATP is bound at residue 14–21 (GKGGVGKS). Positions 188 and 191 each coordinate [4Fe-4S] cluster.

The protein belongs to the Mrp/NBP35 ATP-binding proteins family. NUBP2/CFD1 subfamily. In terms of assembly, heterotetramer of 2 Nubp1 and 2 Nubp2 chains. [4Fe-4S] cluster serves as cofactor.

The protein localises to the cytoplasm. Component of the cytosolic iron-sulfur (Fe/S) protein assembly (CIA) machinery. Required for maturation of extramitochondrial Fe-S proteins. The Nubp1-Nubp2 heterotetramer forms a Fe-S scaffold complex, mediating the de novo assembly of an Fe-S cluster and its transfer to target apoproteins. This is Cytosolic Fe-S cluster assembly factor Nubp2 homolog from Drosophila pseudoobscura pseudoobscura (Fruit fly).